We begin with the raw amino-acid sequence, 302 residues long: Dermonecrotic toxin LiSicTox-alphaIA2bii (302 aa).

A signal peptide spans 1–14; it reads IALILVCWSVLSQA. The propeptide occupies 15–22; the sequence is AQTDVEGR. Histidine 34 is an active-site residue. Glutamate 54 and aspartate 56 together coordinate Mg(2+). Histidine 70 acts as the Nucleophile in catalysis. Disulfide bonds link cysteine 74/cysteine 80 and cysteine 76/cysteine 219. A Mg(2+)-binding site is contributed by aspartate 114. N-linked (GlcNAc...) asparagine glycosylation occurs at asparagine 279.

Belongs to the arthropod phospholipase D family. Class II subfamily. Mg(2+) is required as a cofactor. Expressed by the venom gland.

The protein localises to the secreted. It carries out the reaction an N-(acyl)-sphingosylphosphocholine = an N-(acyl)-sphingosyl-1,3-cyclic phosphate + choline. The catalysed reaction is an N-(acyl)-sphingosylphosphoethanolamine = an N-(acyl)-sphingosyl-1,3-cyclic phosphate + ethanolamine. The enzyme catalyses a 1-acyl-sn-glycero-3-phosphocholine = a 1-acyl-sn-glycero-2,3-cyclic phosphate + choline. It catalyses the reaction a 1-acyl-sn-glycero-3-phosphoethanolamine = a 1-acyl-sn-glycero-2,3-cyclic phosphate + ethanolamine. In terms of biological role, dermonecrotic toxins cleave the phosphodiester linkage between the phosphate and headgroup of certain phospholipids (sphingolipid and lysolipid substrates), forming an alcohol (often choline) and a cyclic phosphate. This toxin acts on sphingomyelin (SM). It may also act on ceramide phosphoethanolamine (CPE), lysophosphatidylcholine (LPC) and lysophosphatidylethanolamine (LPE), but not on lysophosphatidylserine (LPS), and lysophosphatidylglycerol (LPG). It acts by transphosphatidylation, releasing exclusively cyclic phosphate products as second products. Induces dermonecrosis, hemolysis, increased vascular permeability, edema, inflammatory response, and platelet aggregation. This is Dermonecrotic toxin LiSicTox-alphaIA2bii from Loxosceles intermedia (Brown spider).